The chain runs to 218 residues: Ras-related protein Rab-11B (218 aa).

G2 carries the N-acetylglycine modification. A Citrulline modification is found at R4. 11 residues coordinate GTP: S20, G21, G23, K24, S25, N26, N37, L38, S40, S42, and T43. S25 is a Mg(2+) binding site. The short motif at 36–47 (FNLESKSTIGVE) is the Switch 1 element. Residues T43 and D66 each contribute to the Mg(2+) site. The Switch 2 signature appears at 67–86 (TAGQERYRAITSAYYRGAVG). GTP-binding residues include G69, N124, K125, D127, A155, and L156. The interval 184-218 (RAAHDESPGNNVVDISVPPTTDGQRPNKLQCCQSL) is disordered. Residues C214 and C215 are each lipidated (S-geranylgeranyl cysteine). C215 bears the Cysteine methyl ester mark. Residues 216-218 (QSL) constitute a propeptide, removed in mature form.

The protein belongs to the small GTPase superfamily. Rab family. As to quaternary structure, interacts with KCNMA1. Interacts with RAB11FIP1, RAB11FIP2, RAB11FIP3 and RAB11FIP4. May interact with TBC1D14. Interacts with ATP6V1E1. Interacts with PI4KB. Interacts (GDP-bound form) with ZFYVE27. Interacts (GDP-bound form) with KIF5A in a ZFYVE27-dependent manner. Interacts with RELCH. Interacts (in GTP-bound form) with TBC1D8B (via domain Rab-GAP TBC). Forms a complex containing RAB11B, ASAP1, Rabin8/RAB3IP, RAP11FIP3 and ARF4. Interacts with WDR44. It depends on Mg(2+) as a cofactor. Citrullinated by PADI4. As to expression, abundantly expressed in brain, heart and testis. Also detected in kidney and pancreatic islets.

Its subcellular location is the recycling endosome membrane. It localises to the cytoplasmic vesicle. It is found in the secretory vesicle. The protein localises to the synaptic vesicle membrane. The protein resides in the phagosome membrane. It catalyses the reaction GTP + H2O = GDP + phosphate + H(+). Its activity is regulated as follows. Regulated by guanine nucleotide exchange factors (GEFs) which promote the exchange of bound GDP for free GTP. Regulated by GTPase activating proteins (GAPs) which increase the GTP hydrolysis activity. Inhibited by GDP dissociation inhibitors (GDIs) which prevent Rab-GDP dissociation. In terms of biological role, the small GTPases Rab are key regulators of intracellular membrane trafficking, from the formation of transport vesicles to their fusion with membranes. Rabs cycle between an inactive GDP-bound form and an active GTP-bound form that is able to recruit to membranes different set of downstream effectors directly responsible for vesicle formation, movement, tethering and fusion. The small Rab GTPase RAB11B plays a role in endocytic recycling, regulating apical recycling of several transmembrane proteins including cystic fibrosis transmembrane conductance regulator/CFTR, epithelial sodium channel/ENaC, potassium voltage-gated channel, and voltage-dependent L-type calcium channel. May also regulate constitutive and regulated secretion, like insulin granule exocytosis. Required for melanosome transport and release from melanocytes. Also regulates V-ATPase intracellular transport in response to extracellular acidosis. Promotes Rabin8/RAB3IP preciliary vesicular trafficking to mother centriole by forming a ciliary targeting complex containing Rab11, ASAP1, Rabin8/RAB3IP, RAB11FIP3 and ARF4, thereby regulating ciliogenesis initiation. On the contrary, upon LPAR1 receptor signaling pathway activation, interaction with phosphorylated WDR44 prevents Rab11-RAB3IP-RAB11FIP3 complex formation and cilia growth. The polypeptide is Ras-related protein Rab-11B (Mus musculus (Mouse)).